Here is a 104-residue protein sequence, read N- to C-terminus: Evasin P1174 (104 aa).

Residues 1–27 (LKTFCLFLQIAVFIALGIQIFLCGTDA) form the signal peptide. Disulfide bonds link cysteine 40–cysteine 59, cysteine 44–cysteine 61, and cysteine 55–cysteine 72. N-linked (GlcNAc...) asparagine glycans are attached at residues asparagine 43, asparagine 49, and asparagine 58. Positions 85–104 (KPTSEEIADASPRPKETNSH) are disordered.

It localises to the secreted. Functionally, salivary chemokine-binding protein which binds to host chemokines CXCL1 and CXCL8. The protein is Evasin P1174 of Ixodes ricinus (Common tick).